Reading from the N-terminus, the 607-residue chain is Inactive metallocarboxypeptidase ECM14 (607 aa).

The first 21 residues, 1–21, serve as a signal peptide directing secretion; that stretch reads MRLFTHGQVLALLAFVNTISA. A propeptide spanning residues 22–174 is cleaved from the precursor; it reads IPSFSTNSYP…QTIYESYPSP (153 aa). Positions 202-522 constitute a Peptidase M14 domain; sequence NYQPLSVIVP…NAVMMLGRFL (321 aa). 2 residues coordinate Zn(2+): histidine 264 and glutamate 267. Substrate contacts are provided by residues 264-267, arginine 322, and 339-340; these read HARE and DR. A disulfide bond links cysteine 333 and cysteine 356. The N-linked (GlcNAc...) asparagine glycan is linked to asparagine 349. Histidine 396 contacts Zn(2+). 397–398 provides a ligand contact to substrate; sequence SY. Positions 539-607 are disordered; it reads QRPNKDDKPI…GWGFRRLRKR (69 aa). Acidic residues predominate over residues 550–571; the sequence is NDDDDDDNDDDDDDDDDADTND. Residues 573–590 show a composition bias toward basic and acidic residues; that stretch reads GIGRKDDSWVPDEYKGDN.

It belongs to the peptidase M14 family. The cofactor is Zn(2+).

The protein resides in the vacuole. The protein localises to the secreted. Inactive carboxypeptidase that may play a role in cell wall organization and biogenesis. This is Inactive metallocarboxypeptidase ECM14 (ECM14) from Ajellomyces capsulatus (strain NAm1 / WU24) (Darling's disease fungus).